The chain runs to 397 residues: Tryptophan synthase beta chain (397 aa).

K86 is modified (N6-(pyridoxal phosphate)lysine).

It belongs to the TrpB family. Tetramer of two alpha and two beta chains. Requires pyridoxal 5'-phosphate as cofactor.

It catalyses the reaction (1S,2R)-1-C-(indol-3-yl)glycerol 3-phosphate + L-serine = D-glyceraldehyde 3-phosphate + L-tryptophan + H2O. It functions in the pathway amino-acid biosynthesis; L-tryptophan biosynthesis; L-tryptophan from chorismate: step 5/5. Its function is as follows. The beta subunit is responsible for the synthesis of L-tryptophan from indole and L-serine. The chain is Tryptophan synthase beta chain from Aeromonas hydrophila subsp. hydrophila (strain ATCC 7966 / DSM 30187 / BCRC 13018 / CCUG 14551 / JCM 1027 / KCTC 2358 / NCIMB 9240 / NCTC 8049).